We begin with the raw amino-acid sequence, 561 residues long: Arginine--tRNA ligase (561 aa).

Positions 128 to 138 match the 'HIGH' region motif; sequence ANPTGPLHVGH.

It belongs to the class-I aminoacyl-tRNA synthetase family. In terms of assembly, monomer.

The protein resides in the cytoplasm. The enzyme catalyses tRNA(Arg) + L-arginine + ATP = L-arginyl-tRNA(Arg) + AMP + diphosphate. This Marinobacter nauticus (strain ATCC 700491 / DSM 11845 / VT8) (Marinobacter aquaeolei) protein is Arginine--tRNA ligase.